The sequence spans 203 residues: Nucleoside triphosphate pyrophosphatase (203 aa).

Catalysis depends on aspartate 77, which acts as the Proton acceptor.

Belongs to the Maf family. A divalent metal cation serves as cofactor.

The protein localises to the cytoplasm. The enzyme catalyses a ribonucleoside 5'-triphosphate + H2O = a ribonucleoside 5'-phosphate + diphosphate + H(+). It carries out the reaction a 2'-deoxyribonucleoside 5'-triphosphate + H2O = a 2'-deoxyribonucleoside 5'-phosphate + diphosphate + H(+). Functionally, nucleoside triphosphate pyrophosphatase. May have a dual role in cell division arrest and in preventing the incorporation of modified nucleotides into cellular nucleic acids. The protein is Nucleoside triphosphate pyrophosphatase of Rickettsia felis (strain ATCC VR-1525 / URRWXCal2) (Rickettsia azadi).